We begin with the raw amino-acid sequence, 932 residues long: Lon protease homolog 2, peroxisomal (932 aa).

The Lon N-terminal domain maps to 11–259 (LALVPLPKGS…RVVELLARQV (249 aa)). Residues 304–340 (TGLTPPGAAGGRNNEDEKETNEVDELQKRLQEAELSP) are disordered. Basic and acidic residues predominate over residues 328 to 340 (ELQKRLQEAELSP). Residue 486 to 493 (GPPGTGKT) coordinates ATP. In terms of domain architecture, Lon proteolytic spans 729–916 (HGRPGVVTGL…WEAIRQVWPG (188 aa)). Active-site residues include serine 822 and lysine 865. The Microbody targeting signal motif lies at 930–932 (SRL).

It belongs to the peptidase S16 family.

The protein resides in the peroxisome matrix. The catalysed reaction is Hydrolysis of proteins in presence of ATP.. Functionally, ATP-dependent serine protease that mediates the selective degradation of misfolded and unassembled polypeptides in the peroxisomal matrix. Necessary for type 2 peroxisome targeting signal (PTS2)-containing protein processing and facilitates peroxisome matrix protein import. The chain is Lon protease homolog 2, peroxisomal from Aspergillus fumigatus (strain ATCC MYA-4609 / CBS 101355 / FGSC A1100 / Af293) (Neosartorya fumigata).